The primary structure comprises 549 residues: Glucose-6-phosphate isomerase (549 aa).

E355 acts as the Proton donor in catalysis. Active-site residues include H387 and K515.

This sequence belongs to the GPI family.

It localises to the cytoplasm. It carries out the reaction alpha-D-glucose 6-phosphate = beta-D-fructose 6-phosphate. Its pathway is carbohydrate biosynthesis; gluconeogenesis. The protein operates within carbohydrate degradation; glycolysis; D-glyceraldehyde 3-phosphate and glycerone phosphate from D-glucose: step 2/4. Its function is as follows. Catalyzes the reversible isomerization of glucose-6-phosphate to fructose-6-phosphate. The chain is Glucose-6-phosphate isomerase from Haemophilus influenzae (strain 86-028NP).